Reading from the N-terminus, the 22-residue chain is Brevinin-1OKc (22 aa).

Position 22 is a lysine amide (K22).

As to expression, expressed by the skin glands.

It localises to the secreted. In terms of biological role, antimicrobial peptide. Active against Gram-negative bacterium E.coli (MIC=6 uM) and against Gram-positive bacterium S.aureus (MIC=12.5 uM). The sequence is that of Brevinin-1OKc from Nidirana okinavana (Kampira Falls frog).